A 416-amino-acid chain; its full sequence is ABSCISIC ACID-INSENSITIVE 5-like protein 5 (416 aa).

The tract at residues 1–23 is disordered; the sequence is MDGSMNLGNEPPGDGGGGGGLTR. The segment covering 13-22 has biased composition (gly residues); the sequence is GDGGGGGGLT. A phosphoserine mark is found at Ser26, Ser45, and Ser86. Residue Thr135 is modified to Phosphothreonine. The tract at residues 300 to 326 is disordered; that stretch reads SEGIGKSNGDSSSLSPSPYMFNGGVRG. The region spanning 336–399 is the bZIP domain; that stretch reads VERRQRRMIK…KNQETEMRNL (64 aa). The interval 338-357 is basic motif; that stretch reads RRQRRMIKNRESAARSRARK. The interval 364–385 is leucine-zipper; the sequence is LEAEVAKLKEENDELQRKQARI. Positions 388–416 are disordered; it reads MQKNQETEMRNLLQGGPKKKLRRTESGPW.

The protein belongs to the bZIP family. ABI5 subfamily. As to quaternary structure, DNA-binding heterodimer. Interacts with ARIA. In terms of processing, the activation by phosphorylation is induced by abscisic acid (ABA). Phosphorylated by SRK2C, SRK2D, SRK2E, SRK2F and SRK2I in vitro. Expressed in roots, leaves, flowers and siliques but not in seeds.

The protein localises to the nucleus. In terms of biological role, involved in ABA and stress responses and acts as a positive component of glucose signal transduction. Functions as a transcriptional activator in the ABA-inducible expression of rd29B. Binds specifically to the ABA-responsive element (ABRE) of the rd29B gene promoter. This Arabidopsis thaliana (Mouse-ear cress) protein is ABSCISIC ACID-INSENSITIVE 5-like protein 5 (ABF2).